Here is a 517-residue protein sequence, read N- to C-terminus: MDIVGGQHLRQMWDDLAGIYEDKTALIFESCAGEVQHFSYASLNREINRTANLFYSLGIRKGDNVALHLDNCPEFIFCWFGLAKIGAIVVPINARLLREESAWILQNSRTSLLVTSAPFYPMYRQIQQEGRTPLSHICLIGPTLPAEEGVSHFYTLKAQQPDVLLYTPPLTPDDTAEILFTSGTTSRPKGVVITHYNLRFAGYYSSWQCALREDDVYLTVMPAFHIDCQCTAAMAAFSVGATFVLIEKYSARAFWGQVRKYCATVTECIPMMIRTLMTQTPAADDRHHCLREVMFYLNLSVQEKEAFTERFGVRLFTSYGMTETIVGIIGDRPGDKRRWPSIGRPGFCYEAEIRNEQNRALPPGEIGEICIKGIPGKTLFKSYFERPDATAKALEPNGWLHTGDSGYRDEEGFFYFVDRRCNMVKRGGENVSCVELENIIAGHPKIQDVVVIGIKDDIRDEAIKAFVVLNEGETLTEEDFFTFCEENMAKFKVPSYLEIREDLPRNCSGKIIKKNLK.

The protein belongs to the ATP-dependent AMP-binding enzyme family.

The enzyme catalyses 4-(trimethylamino)butanoate + ATP + CoA = 4-(trimethylamino)butanoyl-CoA + AMP + diphosphate. The catalysed reaction is crotonobetaine + ATP + CoA = crotonobetainyl-CoA + AMP + diphosphate. It carries out the reaction (R)-carnitine + ATP + CoA = (R)-carnitinyl-CoA + AMP + diphosphate. It functions in the pathway amine and polyamine metabolism; carnitine metabolism. Catalyzes the transfer of CoA to carnitine, generating the initial carnitinyl-CoA needed for the CaiB reaction cycle. Also has activity toward crotonobetaine and gamma-butyrobetaine. In Salmonella arizonae (strain ATCC BAA-731 / CDC346-86 / RSK2980), this protein is Crotonobetaine/carnitine--CoA ligase.